Reading from the N-terminus, the 69-residue chain is Large ribosomal subunit protein bL31 (69 aa).

It belongs to the bacterial ribosomal protein bL31 family. Type A subfamily. In terms of assembly, part of the 50S ribosomal subunit.

Functionally, binds the 23S rRNA. The sequence is that of Large ribosomal subunit protein bL31 from Magnetococcus marinus (strain ATCC BAA-1437 / JCM 17883 / MC-1).